The chain runs to 81 residues: Small ribosomal subunit protein bS20 (81 aa).

It belongs to the bacterial ribosomal protein bS20 family.

Binds directly to 16S ribosomal RNA. This Mycoplasma capricolum subsp. capricolum (strain California kid / ATCC 27343 / NCTC 10154) protein is Small ribosomal subunit protein bS20.